A 134-amino-acid polypeptide reads, in one-letter code: Small ribosomal subunit protein uS8c (134 aa).

Belongs to the universal ribosomal protein uS8 family. Part of the 30S ribosomal subunit.

The protein resides in the plastid. It is found in the chloroplast. One of the primary rRNA binding proteins, it binds directly to 16S rRNA central domain where it helps coordinate assembly of the platform of the 30S subunit. In Pelargonium hortorum (Common geranium), this protein is Small ribosomal subunit protein uS8c (rps8).